The following is a 245-amino-acid chain: Ribonuclease PH (245 aa).

Phosphate-binding positions include Arg-86 and 124–126; that span reads GTR.

It belongs to the RNase PH family. In terms of assembly, homohexameric ring arranged as a trimer of dimers.

It carries out the reaction tRNA(n+1) + phosphate = tRNA(n) + a ribonucleoside 5'-diphosphate. In terms of biological role, phosphorolytic 3'-5' exoribonuclease that plays an important role in tRNA 3'-end maturation. Removes nucleotide residues following the 3'-CCA terminus of tRNAs; can also add nucleotides to the ends of RNA molecules by using nucleoside diphosphates as substrates, but this may not be physiologically important. Probably plays a role in initiation of 16S rRNA degradation (leading to ribosome degradation) during starvation. The polypeptide is Ribonuclease PH (Bacillus cereus (strain B4264)).